Here is a 471-residue protein sequence, read N- to C-terminus: Putative ETHYLENE INSENSITIVE 3-like 4 protein (471 aa).

Positions 280 to 316 (DLKISEDQDDQESSGSKRKSESMEPSKSVYTCQNSSC) are disordered. Polar residues predominate over residues 304 to 316 (PSKSVYTCQNSSC).

The protein belongs to the EIN3 family.

The protein localises to the nucleus. Functionally, putative transcription factor that may be involved in the ethylene response pathway. This is Putative ETHYLENE INSENSITIVE 3-like 4 protein (EIL4) from Arabidopsis thaliana (Mouse-ear cress).